Reading from the N-terminus, the 1635-residue chain is U3 small nucleolar RNA-associated protein 10 (1635 aa).

Residues 781–803 (TTSMDAPSDESTKRRRRSSSSTV) are disordered. A run of 2 helical transmembrane segments spans residues 1141 to 1161 (PELL…TVAG) and 1288 to 1308 (IALS…SFMV).

The protein belongs to the HEATR1/UTP10 family. In terms of assembly, component of the ribosomal small subunit (SSU) processome.

It localises to the nucleus. It is found in the nucleolus. The protein localises to the membrane. Involved in nucleolar processing of pre-18S ribosomal RNA. Involved in ribosome biosynthesis. The protein is U3 small nucleolar RNA-associated protein 10 of Yarrowia lipolytica (strain CLIB 122 / E 150) (Yeast).